Consider the following 506-residue polypeptide: Probable alpha-L-arabinofuranosidase B (506 aa).

The signal sequence occupies residues 1-26 (MLSQPSRERAFVLALGLVVSSSLAAA). The segment at 27-343 (APCDIYSSGG…ADIVAANYAV (317 aa)) is catalytic. 3 cysteine pairs are disulfide-bonded: cysteine 29-cysteine 39, cysteine 89-cysteine 94, and cysteine 184-cysteine 185. Aspartate 227 is a binding site for substrate. The Nucleophile role is filled by glutamate 229. Asparagine 230 contributes to the substrate binding site. Residue asparagine 285 is glycosylated (N-linked (GlcNAc...) asparagine). Residue glycine 304 participates in substrate binding. Residue aspartate 305 is the Proton donor of the active site. Positions 344-506 (TSLTSGPALT…VSWVISSGFA (163 aa)) are ABD. A disulfide bridge connects residues cysteine 409 and cysteine 447. Substrate is bound by residues histidine 424, asparagine 426, phenylalanine 427, aspartate 443, histidine 471, leucine 476, and aspartate 496.

The protein belongs to the glycosyl hydrolase 54 family.

It localises to the secreted. The enzyme catalyses Hydrolysis of terminal non-reducing alpha-L-arabinofuranoside residues in alpha-L-arabinosides.. The protein operates within glycan metabolism; L-arabinan degradation. Functionally, alpha-L-arabinofuranosidase involved in the degradation of arabinoxylan, a major component of plant hemicellulose. Able to hydrolyze 1,5-, 1,3- and 1,2-alpha-linkages not only in L-arabinofuranosyl oligosaccharides, but also in polysaccharides containing terminal non-reducing L-arabinofuranoses in side chains, like L-arabinan, arabinogalactan and arabinoxylan. This is Probable alpha-L-arabinofuranosidase B (abfB) from Aspergillus clavatus (strain ATCC 1007 / CBS 513.65 / DSM 816 / NCTC 3887 / NRRL 1 / QM 1276 / 107).